We begin with the raw amino-acid sequence, 457 residues long: MLDIKLIRENPDLVKGDLIKRGEIEKIKWIDEILELDKKWRENLRKINQLRKERNQLAVQIGKRKKAGEPIDDLLAKSNEIVKQIETLEKEVEELRAKIDYYLWRLPNITHESVPIGKDDSENVPIRFWGKAKVWEGFLETFKEQSLGKMDYEVIDWRPRLHVDMLEILRGADIERAAKVSGSRFYYLLNELVILDLALIRFALDKLIEKGFIPVIPPYMVRRYVEEGVTSFGDFEDVIYKVEGEDLYLIPTAEHPLAGMHANEILEGKDLPLLYVGISPCFRKEAGTAGKDTKGIFRVHQFHKVEQFVYSRPEESWEWHEKLIQNAEEIFQELEIPYRVVNICTGDLGYVAAKKYDIEAWMAGQGKFREVVSASNCTEWQARRLNIRYRDKTHEKPKFVHTLNSTAIATSRAIVAILENHQTEEGVVKLPKVLWKYTGFKEILPAHMKEKCCQGLE.

Position 252 to 254 (252 to 254) interacts with L-serine; that stretch reads TAE. ATP-binding positions include 283–285 and valine 299; that span reads RKE. Glutamate 306 contributes to the L-serine binding site. An ATP-binding site is contributed by 370–373; the sequence is EVVS. Threonine 406 lines the L-serine pocket.

The protein belongs to the class-II aminoacyl-tRNA synthetase family. Type-1 seryl-tRNA synthetase subfamily. Homodimer. The tRNA molecule binds across the dimer.

The protein resides in the cytoplasm. It catalyses the reaction tRNA(Ser) + L-serine + ATP = L-seryl-tRNA(Ser) + AMP + diphosphate + H(+). The catalysed reaction is tRNA(Sec) + L-serine + ATP = L-seryl-tRNA(Sec) + AMP + diphosphate + H(+). The protein operates within aminoacyl-tRNA biosynthesis; selenocysteinyl-tRNA(Sec) biosynthesis; L-seryl-tRNA(Sec) from L-serine and tRNA(Sec): step 1/1. Catalyzes the attachment of serine to tRNA(Ser). Is also able to aminoacylate tRNA(Sec) with serine, to form the misacylated tRNA L-seryl-tRNA(Sec), which will be further converted into selenocysteinyl-tRNA(Sec). This Thermococcus onnurineus (strain NA1) protein is Serine--tRNA ligase.